We begin with the raw amino-acid sequence, 1404 residues long: DNA-directed RNA polymerase subunit beta' (1404 aa).

Zn(2+) contacts are provided by Cys-70, Cys-72, Cys-85, and Cys-88. Mg(2+) contacts are provided by Asp-458, Asp-460, and Asp-462. Zn(2+) is bound by residues Cys-813, Cys-887, Cys-894, and Cys-897. The tract at residues 1377-1404 (ERRAIAESEAAELEASQAETSDENAAAE) is disordered.

Belongs to the RNA polymerase beta' chain family. As to quaternary structure, the RNAP catalytic core consists of 2 alpha, 1 beta, 1 beta' and 1 omega subunit. When a sigma factor is associated with the core the holoenzyme is formed, which can initiate transcription. The cofactor is Mg(2+). Zn(2+) is required as a cofactor.

The enzyme catalyses RNA(n) + a ribonucleoside 5'-triphosphate = RNA(n+1) + diphosphate. In terms of biological role, DNA-dependent RNA polymerase catalyzes the transcription of DNA into RNA using the four ribonucleoside triphosphates as substrates. The sequence is that of DNA-directed RNA polymerase subunit beta' from Polaromonas naphthalenivorans (strain CJ2).